The following is a 401-amino-acid chain: Argininosuccinate synthase (401 aa).

Residue 9-17 coordinates ATP; it reads AYSGGLDTS. Tyr-88 provides a ligand contact to L-citrulline. Residue Gly-118 coordinates ATP. The L-aspartate site is built by Thr-120, Asn-124, and Asp-125. Asn-124 is an L-citrulline binding site. L-citrulline is bound by residues Arg-128, Ser-177, Ser-186, Glu-262, and Tyr-274.

This sequence belongs to the argininosuccinate synthase family. Type 1 subfamily. As to quaternary structure, homotetramer.

It localises to the cytoplasm. It carries out the reaction L-citrulline + L-aspartate + ATP = 2-(N(omega)-L-arginino)succinate + AMP + diphosphate + H(+). Its pathway is amino-acid biosynthesis; L-arginine biosynthesis; L-arginine from L-ornithine and carbamoyl phosphate: step 2/3. The protein is Argininosuccinate synthase of Chlorobaculum tepidum (strain ATCC 49652 / DSM 12025 / NBRC 103806 / TLS) (Chlorobium tepidum).